The chain runs to 526 residues: Phosphoenolpyruvate carboxylase (526 aa).

It belongs to the PEPCase type 2 family. Homotetramer. Requires Mg(2+) as cofactor.

It carries out the reaction oxaloacetate + phosphate = phosphoenolpyruvate + hydrogencarbonate. In terms of biological role, catalyzes the irreversible beta-carboxylation of phosphoenolpyruvate (PEP) to form oxaloacetate (OAA), a four-carbon dicarboxylic acid source for the tricarboxylic acid cycle. This chain is Phosphoenolpyruvate carboxylase, found in Methanosarcina mazei (strain ATCC BAA-159 / DSM 3647 / Goe1 / Go1 / JCM 11833 / OCM 88) (Methanosarcina frisia).